Here is a 97-residue protein sequence, read N- to C-terminus: Aspartyl/glutamyl-tRNA(Asn/Gln) amidotransferase subunit C (97 aa).

The protein belongs to the GatC family. As to quaternary structure, heterotrimer of A, B and C subunits.

It carries out the reaction L-glutamyl-tRNA(Gln) + L-glutamine + ATP + H2O = L-glutaminyl-tRNA(Gln) + L-glutamate + ADP + phosphate + H(+). The catalysed reaction is L-aspartyl-tRNA(Asn) + L-glutamine + ATP + H2O = L-asparaginyl-tRNA(Asn) + L-glutamate + ADP + phosphate + 2 H(+). Its function is as follows. Allows the formation of correctly charged Asn-tRNA(Asn) or Gln-tRNA(Gln) through the transamidation of misacylated Asp-tRNA(Asn) or Glu-tRNA(Gln) in organisms which lack either or both of asparaginyl-tRNA or glutaminyl-tRNA synthetases. The reaction takes place in the presence of glutamine and ATP through an activated phospho-Asp-tRNA(Asn) or phospho-Glu-tRNA(Gln). This is Aspartyl/glutamyl-tRNA(Asn/Gln) amidotransferase subunit C from Synechococcus sp. (strain CC9605).